Reading from the N-terminus, the 368-residue chain is tRNA-specific 2-thiouridylase MnmA (368 aa).

Residues Gly-11 to Ser-18 and Met-37 each bind ATP. Positions Asn-97 to Asp-99 are interaction with target base in tRNA. Cys-102 functions as the Nucleophile in the catalytic mechanism. An intrachain disulfide couples Cys-102 to Cys-199. Gly-127 is an ATP binding site. The interaction with tRNA stretch occupies residues Lys-149–Gln-151. Catalysis depends on Cys-199, which acts as the Cysteine persulfide intermediate. The segment at Arg-311–Tyr-312 is interaction with tRNA.

The protein belongs to the MnmA/TRMU family. Interacts with TusE.

Its subcellular location is the cytoplasm. The catalysed reaction is S-sulfanyl-L-cysteinyl-[protein] + uridine(34) in tRNA + AH2 + ATP = 2-thiouridine(34) in tRNA + L-cysteinyl-[protein] + A + AMP + diphosphate + H(+). Its function is as follows. Catalyzes the 2-thiolation of uridine at the wobble position (U34) of tRNA(Lys), tRNA(Glu) and tRNA(Gln), leading to the formation of s(2)U34, the first step of tRNA-mnm(5)s(2)U34 synthesis. Sulfur is provided by IscS, via a sulfur-relay system. Binds ATP and its substrate tRNAs. The protein is tRNA-specific 2-thiouridylase MnmA of Escherichia coli (strain SMS-3-5 / SECEC).